We begin with the raw amino-acid sequence, 348 residues long: Tocopherol O-methyltransferase, chloroplastic (348 aa).

A chloroplast-targeting transit peptide spans 1–51 (MKATLAAPSSLTSLPYRTNSSFGSKSSLLFRSPSSSSSVSMTTTRGNVAVA). Position 52 is an N-acetylalanine (Ala-52). Residues 130–139 (VVDVGCGIGG) form an SAM motif I region. An SAM motif II region spans residues 193–201 (GKFDLVWSM). Residues 220 to 229 (VAAPGGRIII) form an SAM motif III region.

It belongs to the class I-like SAM-binding methyltransferase superfamily. gTMT family.

Its subcellular location is the plastid. The protein resides in the chloroplast. The catalysed reaction is gamma-tocopherol + S-adenosyl-L-methionine = (+)-alpha-tocopherol + S-adenosyl-L-homocysteine + H(+). It carries out the reaction delta-tocotrienol + S-adenosyl-L-methionine = beta-tocotrienol + S-adenosyl-L-homocysteine + H(+). The enzyme catalyses gamma-tocotrienol + S-adenosyl-L-methionine = alpha-tocotrienol + S-adenosyl-L-homocysteine + H(+). It catalyses the reaction delta-tocopherol + S-adenosyl-L-methionine = beta-tocopherol + S-adenosyl-L-homocysteine + H(+). It functions in the pathway cofactor biosynthesis; tocopherol biosynthesis. In terms of biological role, involved in the synthesis of tocopherol (vitamin E). Methylates gamma- and delta-tocopherol to form beta- and alpha-tocopherol, respectively. This is Tocopherol O-methyltransferase, chloroplastic (VTE4) from Arabidopsis thaliana (Mouse-ear cress).